The following is a 276-amino-acid chain: MFTIGAHLSISKGFENLGLEALSIDANTAQFFPRSPRGGKAKPLNQADVDGLQELMDNTTMDVILAHAPYIINLASKSEKTRNNAYEIFEDDLKRLDNLPNNMYNFHPGSHVQQGVEKGIELISDSLNKLIREDMKTTILLETMAGKGTEIGRTFEELESIIEKIDMDEKVGVCIDTCHIYDGGYDIVNDLDGVIDEFDSIIGLDRLKAIHLNDSKYGLNSHKDRHEKIGMGKIGIDAITEIINHKKLRDLPFYLETPNDVEGYKEEIDLLRGLYK.

The Zn(2+) site is built by His67, His107, Glu142, Asp176, His179, His211, Asp224, His226, and Glu256.

This sequence belongs to the AP endonuclease 2 family. Requires Zn(2+) as cofactor.

The enzyme catalyses Endonucleolytic cleavage to 5'-phosphooligonucleotide end-products.. Functionally, endonuclease IV plays a role in DNA repair. It cleaves phosphodiester bonds at apurinic or apyrimidinic (AP) sites, generating a 3'-hydroxyl group and a 5'-terminal sugar phosphate. This chain is Probable endonuclease 4, found in Methanosphaera stadtmanae (strain ATCC 43021 / DSM 3091 / JCM 11832 / MCB-3).